We begin with the raw amino-acid sequence, 392 residues long: Chalcone synthase B (392 aa).

Cysteine 167 is an active-site residue.

It belongs to the thiolase-like superfamily. Chalcone/stilbene synthases family. In terms of tissue distribution, expressed at low level in seedlings after illumination with UV light. No expression in flowers or tissue culture.

The enzyme catalyses (E)-4-coumaroyl-CoA + 3 malonyl-CoA + 3 H(+) = 2',4,4',6'-tetrahydroxychalcone + 3 CO2 + 4 CoA. The protein operates within secondary metabolite biosynthesis; flavonoid biosynthesis. Its function is as follows. The primary product of this enzyme is 4,2',4',6'-tetrahydroxychalcone (also termed naringenin-chalcone or chalcone) which can under specific conditions spontaneously isomerize into naringenin. This Petunia hybrida (Petunia) protein is Chalcone synthase B (CHSB).